The primary structure comprises 515 residues: 2-isopropylmalate synthase (515 aa).

The 263-residue stretch at 5–267 folds into the Pyruvate carboxyltransferase domain; it reads VIIFDTTLRD…HTGLDHKEIH (263 aa). Asp14, His202, His204, and Asn238 together coordinate Mn(2+). Residues 392–515 form a regulatory domain region; that stretch reads KLNYLSVQSG…EMKQQKFATV (124 aa).

The protein belongs to the alpha-IPM synthase/homocitrate synthase family. LeuA type 1 subfamily. As to quaternary structure, homodimer. Requires Mn(2+) as cofactor.

It is found in the cytoplasm. It catalyses the reaction 3-methyl-2-oxobutanoate + acetyl-CoA + H2O = (2S)-2-isopropylmalate + CoA + H(+). The protein operates within amino-acid biosynthesis; L-leucine biosynthesis; L-leucine from 3-methyl-2-oxobutanoate: step 1/4. Its function is as follows. Catalyzes the condensation of the acetyl group of acetyl-CoA with 3-methyl-2-oxobutanoate (2-ketoisovalerate) to form 3-carboxy-3-hydroxy-4-methylpentanoate (2-isopropylmalate). The polypeptide is 2-isopropylmalate synthase (Vibrio atlanticus (strain LGP32) (Vibrio splendidus (strain Mel32))).